A 121-amino-acid chain; its full sequence is Protein opa (121 aa).

It belongs to the opacity porin family.

The sequence is that of Protein opa (opa) from Haemophilus influenzae (strain ATCC 51907 / DSM 11121 / KW20 / Rd).